Here is a 505-residue protein sequence, read N- to C-terminus: Glycerol kinase (505 aa).

Thr-15 contributes to the ADP binding site. Residues Thr-15, Thr-16, and Ser-17 each contribute to the ATP site. A sn-glycerol 3-phosphate-binding site is contributed by Thr-15. Residue Arg-19 participates in ADP binding. Sn-glycerol 3-phosphate-binding residues include Arg-85, Glu-86, Tyr-136, and Asp-249. Glycerol is bound by residues Arg-85, Glu-86, Tyr-136, Asp-249, and Gln-250. ADP is bound by residues Thr-271 and Gly-314. Thr-271, Gly-314, Gln-318, and Gly-415 together coordinate ATP. ADP contacts are provided by Gly-415 and Asn-419.

It belongs to the FGGY kinase family.

It catalyses the reaction glycerol + ATP = sn-glycerol 3-phosphate + ADP + H(+). Its pathway is polyol metabolism; glycerol degradation via glycerol kinase pathway; sn-glycerol 3-phosphate from glycerol: step 1/1. Its activity is regulated as follows. Inhibited by fructose 1,6-bisphosphate (FBP). In terms of biological role, key enzyme in the regulation of glycerol uptake and metabolism. Catalyzes the phosphorylation of glycerol to yield sn-glycerol 3-phosphate. This Mycoplasma capricolum subsp. capricolum (strain California kid / ATCC 27343 / NCTC 10154) protein is Glycerol kinase.